Here is a 92-residue protein sequence, read N- to C-terminus: MSAEVALVYRVLPESVEVDVEKLKEAIVNRLAPKYKVDKVEVEEIGFGIKALRFYIRMPESDEYSSDEVEEILRSVEGVGGFELEYFSRLSF.

This sequence belongs to the EF-1-beta/EF-1-delta family.

Promotes the exchange of GDP for GTP in EF-1-alpha/GDP, thus allowing the regeneration of EF-1-alpha/GTP that could then be used to form the ternary complex EF-1-alpha/GTP/AAtRNA. The polypeptide is Elongation factor 1-beta (Pyrobaculum calidifontis (strain DSM 21063 / JCM 11548 / VA1)).